Reading from the N-terminus, the 2339-residue chain is DNA-directed RNA polymerase III subunit RPC1 (2339 aa).

Zn(2+)-binding residues include Cys88, Cys91, Cys98, His101, Cys128, Cys131, and Cys175. Residues Asp611, Asp613, and Asp615 each coordinate Mg(2+). The tract at residues 955–967 is bridging helix; the sequence is PTEFFFHTMSGRE. Disordered regions lie at residues 1503-1557 and 2038-2079; these read EKRK…NNYY and LKSE…DSDR. The segment covering 1509–1520 has biased composition (basic and acidic residues); the sequence is PKEEKENFDRNN. Positions 1521–1557 are enriched in low complexity; it reads YKMITDNNNNDNNNNNNDNNNNDNNNNNNNSNNNNYY. The segment covering 2038-2047 has biased composition (basic and acidic residues); it reads LKSEKKKDIN. The span at 2049-2059 shows a compositional bias: low complexity; sequence DNNNNDDNNNN.

This sequence belongs to the RNA polymerase beta' chain family. In terms of assembly, component of the RNA polymerase III (Pol III) complex consisting of 17 subunits.

It is found in the nucleus. It catalyses the reaction RNA(n) + a ribonucleoside 5'-triphosphate = RNA(n+1) + diphosphate. Its function is as follows. DNA-dependent RNA polymerase catalyzes the transcription of DNA into RNA using the four ribonucleoside triphosphates as substrates. Largest and catalytic core component of RNA polymerase III which synthesizes small RNAs, such as 5S rRNA and tRNAs. Forms the polymerase active center together with the second largest subunit. A single-stranded DNA template strand of the promoter is positioned within the central active site cleft of Pol III. A bridging helix emanates from RPC1 and crosses the cleft near the catalytic site and is thought to promote translocation of Pol III by acting as a ratchet that moves the RNA-DNA hybrid through the active site by switching from straight to bent conformations at each step of nucleotide addition. The polypeptide is DNA-directed RNA polymerase III subunit RPC1 (Plasmodium falciparum).